A 264-amino-acid polypeptide reads, in one-letter code: MRAYHDLLRRILDDGVAKHDRTGTGTLSVFGHQMRFDLAEGFPLVTTKRLHLKSIIHELLWFLAGDTNVAYLQSNGVTIWDEWADEHGDLGPVYGRQWRSWAKPDGGSVDQIAWVLDEIRRNPDSRRLVVSAWNPADLDRMALAPCHCLFQFYIAERRLSCQLYQRSADAFLGVPFNIASYALLTAMMAHVLDLEPGDFVHTLGDAHLYSNHVAQARQQLARDERPLPRLRLNPEVRSLFDFRYDDVVIEGYDPHPAIRAPVAV.

Arg21 is a binding site for dUMP. Residue His51 participates in (6R)-5,10-methylene-5,6,7,8-tetrahydrofolate binding. 126–127 (RR) lines the dUMP pocket. The Nucleophile role is filled by Cys146. DUMP is bound by residues 166 to 169 (RSAD), Asn177, and 207 to 209 (HLY). Position 169 (Asp169) interacts with (6R)-5,10-methylene-5,6,7,8-tetrahydrofolate. Ala263 serves as a coordination point for (6R)-5,10-methylene-5,6,7,8-tetrahydrofolate.

It belongs to the thymidylate synthase family. Bacterial-type ThyA subfamily. In terms of assembly, homodimer.

The protein resides in the cytoplasm. The catalysed reaction is dUMP + (6R)-5,10-methylene-5,6,7,8-tetrahydrofolate = 7,8-dihydrofolate + dTMP. It functions in the pathway pyrimidine metabolism; dTTP biosynthesis. Functionally, catalyzes the reductive methylation of 2'-deoxyuridine-5'-monophosphate (dUMP) to 2'-deoxythymidine-5'-monophosphate (dTMP) while utilizing 5,10-methylenetetrahydrofolate (mTHF) as the methyl donor and reductant in the reaction, yielding dihydrofolate (DHF) as a by-product. This enzymatic reaction provides an intracellular de novo source of dTMP, an essential precursor for DNA biosynthesis. The polypeptide is Thymidylate synthase (Methylobacterium nodulans (strain LMG 21967 / CNCM I-2342 / ORS 2060)).